A 54-amino-acid chain; its full sequence is MARNEIRPIVKLRSTAGTGYTYVTRKNRRNDPDRLMLKKYDPVVRRHVDFREER.

It belongs to the bacterial ribosomal protein bL33 family.

This is Large ribosomal subunit protein bL33B from Mycobacterium sp. (strain JLS).